Consider the following 387-residue polypeptide: Protein-glutamate methylesterase/protein-glutamine glutaminase 1 (387 aa).

In terms of domain architecture, Response regulatory spans 18-136 (RVMVVDDSAV…EISGGTDFRH (119 aa)). A 4-aspartylphosphate modification is found at Asp-69. In terms of domain architecture, CheB-type methylesterase spans 190 to 387 (PAAEERPDII…AYVLRSANKR (198 aa)). Catalysis depends on residues Ser-204, His-233, and Asp-329.

This sequence belongs to the CheB family. Post-translationally, phosphorylated by CheA. Phosphorylation of the N-terminal regulatory domain activates the methylesterase activity.

The protein localises to the cytoplasm. It carries out the reaction [protein]-L-glutamate 5-O-methyl ester + H2O = L-glutamyl-[protein] + methanol + H(+). The catalysed reaction is L-glutaminyl-[protein] + H2O = L-glutamyl-[protein] + NH4(+). Its function is as follows. Involved in chemotaxis. Part of a chemotaxis signal transduction system that modulates chemotaxis in response to various stimuli. Catalyzes the demethylation of specific methylglutamate residues introduced into the chemoreceptors (methyl-accepting chemotaxis proteins or MCP) by CheR. Also mediates the irreversible deamidation of specific glutamine residues to glutamic acid. The protein is Protein-glutamate methylesterase/protein-glutamine glutaminase 1 of Rhodospirillum rubrum (strain ATCC 11170 / ATH 1.1.1 / DSM 467 / LMG 4362 / NCIMB 8255 / S1).